The primary structure comprises 37 residues: MKIRASVRQICDKCRLIRRRGRIRVICYNPRHKQRQG.

Belongs to the bacterial ribosomal protein bL36 family.

The protein localises to the plastid. In Cuscuta reflexa (Southern Asian dodder), this protein is Large ribosomal subunit protein bL36c.